The sequence spans 530 residues: Arginine--tRNA ligase (530 aa).

The 'HIGH' region signature appears at 113–123 (ANPTGPLHIGH).

The protein belongs to the class-I aminoacyl-tRNA synthetase family. Monomer.

Its subcellular location is the cytoplasm. The enzyme catalyses tRNA(Arg) + L-arginine + ATP = L-arginyl-tRNA(Arg) + AMP + diphosphate. This chain is Arginine--tRNA ligase, found in Campylobacter jejuni (strain RM1221).